The chain runs to 131 residues: MLYPALLCAALLLIAPLGHTEGRTLHPSPDAIQFVEQFLDRYNDLTLDDLENLVSSQPEEPSSAFTSGVKVAEYPKWADIPAQGDSTWLRLLKGTLANQKRAVMDRSRRGWNRGCFGLKLDRIGSMSGLGC.

A signal peptide spans Met-1 to Gly-22. A propeptide spanning residues Arg-23–Arg-109 is cleaved from the precursor. Cysteines 115 and 131 form a disulfide.

Belongs to the natriuretic peptide family. In terms of tissue distribution, expressed in brain and to a low extent in atrium.

It localises to the secreted. Its function is as follows. Exhibits natriuretic and vasodepressant activity. Has a cGMP-stimulating activity. The protein is C-type natriuretic peptide 1 of Oncorhynchus mykiss (Rainbow trout).